A 118-amino-acid chain; its full sequence is UPF0295 protein BcerKBAB4_0454 (118 aa).

2 consecutive transmembrane segments (helical) span residues 12-32 and 43-63; these read IRTFALSLVFIGLFIAYLGVF and FMMVGFLAVIASTVVYFWIGM.

The protein belongs to the UPF0295 family.

The protein resides in the cell membrane. The protein is UPF0295 protein BcerKBAB4_0454 of Bacillus mycoides (strain KBAB4) (Bacillus weihenstephanensis).